The primary structure comprises 39 residues: Cytochrome b559 subunit beta (39 aa).

A helical transmembrane segment spans residues 14–30 (WLAVHGLAVPTVSFLGS). Residue H18 participates in heme binding.

The protein belongs to the PsbE/PsbF family. In terms of assembly, heterodimer of an alpha subunit and a beta subunit. PSII is composed of 1 copy each of membrane proteins PsbA, PsbB, PsbC, PsbD, PsbE, PsbF, PsbH, PsbI, PsbJ, PsbK, PsbL, PsbM, PsbT, PsbX, PsbY, PsbZ, Psb30/Ycf12, at least 3 peripheral proteins of the oxygen-evolving complex and a large number of cofactors. It forms dimeric complexes. It depends on heme b as a cofactor.

It is found in the plastid. It localises to the chloroplast thylakoid membrane. Its function is as follows. This b-type cytochrome is tightly associated with the reaction center of photosystem II (PSII). PSII is a light-driven water:plastoquinone oxidoreductase that uses light energy to abstract electrons from H(2)O, generating O(2) and a proton gradient subsequently used for ATP formation. It consists of a core antenna complex that captures photons, and an electron transfer chain that converts photonic excitation into a charge separation. This chain is Cytochrome b559 subunit beta, found in Lotus japonicus (Lotus corniculatus var. japonicus).